The chain runs to 140 residues: 3-hydroxyacyl-[acyl-carrier-protein] dehydratase FabZ (140 aa).

The active site involves H47.

The protein belongs to the thioester dehydratase family. FabZ subfamily.

It localises to the cytoplasm. The catalysed reaction is a (3R)-hydroxyacyl-[ACP] = a (2E)-enoyl-[ACP] + H2O. Involved in unsaturated fatty acids biosynthesis. Catalyzes the dehydration of short chain beta-hydroxyacyl-ACPs and long chain saturated and unsaturated beta-hydroxyacyl-ACPs. This chain is 3-hydroxyacyl-[acyl-carrier-protein] dehydratase FabZ, found in Streptococcus uberis (strain ATCC BAA-854 / 0140J).